A 282-amino-acid chain; its full sequence is tRNA uridine(34) hydroxylase (282 aa).

The region spanning Asp128 to Tyr222 is the Rhodanese domain. Catalysis depends on Cys182, which acts as the Cysteine persulfide intermediate.

The protein belongs to the TrhO family.

It catalyses the reaction uridine(34) in tRNA + AH2 + O2 = 5-hydroxyuridine(34) in tRNA + A + H2O. Catalyzes oxygen-dependent 5-hydroxyuridine (ho5U) modification at position 34 in tRNAs. The protein is tRNA uridine(34) hydroxylase of Ralstonia nicotianae (strain ATCC BAA-1114 / GMI1000) (Ralstonia solanacearum).